Consider the following 360-residue polypeptide: MQLESLSTLNYRNLAPCTLSFPAGVTGVFGENGAGKTNLLEAAYLALTGLTDVTRLEQLVQSGEGEAYVRADLESGGSLSIQEVGLGRGRRQLKVDGVRVRAGDLPRGSAVWIRPEDSELVFGSPSGRRNFLDALLSRLSARYAQQLARYDRTVSQRNAALRSGEEWAMHVWDDALVKLGSDIMLFRRRALTRLSELAAEANEALGSRKPLVLGLSESTTPETYAHDLRSRRAEELARGSTATGPHRDDLTMTLGDFPATEYASRGEGRTIALALRRAELELLAERFGEKPVLLIDDFSAELDPTRRAFLLDLAASVPQAIVTGTEQAPGAALTLRAHAGRFTPEPEPVSAQVAVDEVGA.

Residue 30-37 (GENGAGKT) coordinates ATP.

Belongs to the RecF family.

It localises to the cytoplasm. The RecF protein is involved in DNA metabolism; it is required for DNA replication and normal SOS inducibility. RecF binds preferentially to single-stranded, linear DNA. It also seems to bind ATP. The polypeptide is DNA replication and repair protein RecF (Deinococcus deserti (strain DSM 17065 / CIP 109153 / LMG 22923 / VCD115)).